Here is a 355-residue protein sequence, read N- to C-terminus: uncharacterized protein (355 aa).

The J domain maps to 9–75; it reads DYYDILNISV…KLREKYDKLG (67 aa).

The protein belongs to the DnaJ family.

Its subcellular location is the cytoplasm. This is an uncharacterized protein from Schizosaccharomyces pombe (strain 972 / ATCC 24843) (Fission yeast).